The chain runs to 323 residues: Ribokinase (323 aa).

Substrate contacts are provided by residues 26-28, 54-58, and glutamate 155; these read MTD and GKGAN. ATP contacts are provided by residues asparagine 200, 236-241, and threonine 257; that span reads TLGASG. The K(+) site is built by aspartate 264 and threonine 266. ATP contacts are provided by residues 269–270 and asparagine 296; that span reads GD. Aspartate 270 contributes to the substrate binding site. The active-site Proton acceptor is aspartate 270. Serine 302, alanine 305, glycine 307, and serine 311 together coordinate K(+).

The protein belongs to the carbohydrate kinase PfkB family. Ribokinase subfamily. Homodimer. Mg(2+) serves as cofactor.

It localises to the cytoplasm. The protein resides in the nucleus. The catalysed reaction is D-ribose + ATP = D-ribose 5-phosphate + ADP + H(+). The protein operates within carbohydrate metabolism; D-ribose degradation; D-ribose 5-phosphate from beta-D-ribopyranose: step 2/2. Its activity is regulated as follows. Activated by a monovalent cation that binds near, but not in, the active site. The most likely occupant of the site in vivo is potassium. Ion binding induces a conformational change that may alter substrate affinity. Competitively inhibited by phosphonoacetic acid, etidronate, 2-carboxethylphosphonic acid, N-(phosphonomethyl)glycine, N-(phosphonomethyl)iminodiacetic acid and clodronate. Catalyzes the phosphorylation of ribose at O-5 in a reaction requiring ATP and magnesium. The resulting D-ribose-5-phosphate can then be used either for sythesis of nucleotides, histidine, and tryptophan, or as a component of the pentose phosphate pathway. The sequence is that of Ribokinase from Mus musculus (Mouse).